A 450-amino-acid chain; its full sequence is tRNA-2-methylthio-N(6)-dimethylallyladenosine synthase (450 aa).

Residues 14–132 (GEFFIETWGC…FPNYLNEVKK (119 aa)) form the MTTase N-terminal domain. The [4Fe-4S] cluster site is built by C23, C59, C93, C169, C173, and C176. In terms of domain architecture, Radical SAM core spans 155 to 385 (RKNSMKAFVT…VEVVNEISAK (231 aa)). One can recognise a TRAM domain in the interval 388-450 (KAYEGKIEEV…NSFSLTGEEI (63 aa)).

Belongs to the methylthiotransferase family. MiaB subfamily. Monomer. The cofactor is [4Fe-4S] cluster.

Its subcellular location is the cytoplasm. It catalyses the reaction N(6)-dimethylallyladenosine(37) in tRNA + (sulfur carrier)-SH + AH2 + 2 S-adenosyl-L-methionine = 2-methylsulfanyl-N(6)-dimethylallyladenosine(37) in tRNA + (sulfur carrier)-H + 5'-deoxyadenosine + L-methionine + A + S-adenosyl-L-homocysteine + 2 H(+). In terms of biological role, catalyzes the methylthiolation of N6-(dimethylallyl)adenosine (i(6)A), leading to the formation of 2-methylthio-N6-(dimethylallyl)adenosine (ms(2)i(6)A) at position 37 in tRNAs that read codons beginning with uridine. The protein is tRNA-2-methylthio-N(6)-dimethylallyladenosine synthase of Clostridium botulinum (strain Loch Maree / Type A3).